Here is a 168-residue protein sequence, read N- to C-terminus: Photosystem I assembly protein Ycf3 (168 aa).

TPR repeat units lie at residues A35–P68, S72–L105, and G120–N153.

This sequence belongs to the Ycf3 family.

It is found in the plastid. The protein resides in the chloroplast thylakoid membrane. In terms of biological role, essential for the assembly of the photosystem I (PSI) complex. May act as a chaperone-like factor to guide the assembly of the PSI subunits. The chain is Photosystem I assembly protein Ycf3 from Plantago lanceolata (English plantain).